Here is an 81-residue protein sequence, read N- to C-terminus: Sulfur carrier protein TusA (81 aa).

Cys19 serves as the catalytic Cysteine persulfide intermediate.

It belongs to the sulfur carrier protein TusA family.

The protein resides in the cytoplasm. In terms of biological role, sulfur carrier protein which probably makes part of a sulfur-relay system. This Shewanella putrefaciens (strain CN-32 / ATCC BAA-453) protein is Sulfur carrier protein TusA.